A 739-amino-acid chain; its full sequence is Phosphoribosylformylglycinamidine synthase subunit PurL (739 aa).

Histidine 52 is an active-site residue. Tyrosine 55 and lysine 94 together coordinate ATP. Glutamate 96 provides a ligand contact to Mg(2+). Substrate-binding positions include 97 to 100 (SHNH) and arginine 119. The active-site Proton acceptor is histidine 98. Aspartate 120 is a binding site for Mg(2+). Glutamine 243 lines the substrate pocket. Aspartate 273 provides a ligand contact to Mg(2+). Residue 317–319 (ESQ) participates in substrate binding. ATP is bound by residues aspartate 500 and glycine 537. Residue asparagine 538 coordinates Mg(2+). Position 540 (serine 540) interacts with substrate.

It belongs to the FGAMS family. As to quaternary structure, monomer. Part of the FGAM synthase complex composed of 1 PurL, 1 PurQ and 2 PurS subunits.

The protein resides in the cytoplasm. It carries out the reaction N(2)-formyl-N(1)-(5-phospho-beta-D-ribosyl)glycinamide + L-glutamine + ATP + H2O = 2-formamido-N(1)-(5-O-phospho-beta-D-ribosyl)acetamidine + L-glutamate + ADP + phosphate + H(+). Its pathway is purine metabolism; IMP biosynthesis via de novo pathway; 5-amino-1-(5-phospho-D-ribosyl)imidazole from N(2)-formyl-N(1)-(5-phospho-D-ribosyl)glycinamide: step 1/2. Part of the phosphoribosylformylglycinamidine synthase complex involved in the purines biosynthetic pathway. Catalyzes the ATP-dependent conversion of formylglycinamide ribonucleotide (FGAR) and glutamine to yield formylglycinamidine ribonucleotide (FGAM) and glutamate. The FGAM synthase complex is composed of three subunits. PurQ produces an ammonia molecule by converting glutamine to glutamate. PurL transfers the ammonia molecule to FGAR to form FGAM in an ATP-dependent manner. PurS interacts with PurQ and PurL and is thought to assist in the transfer of the ammonia molecule from PurQ to PurL. The chain is Phosphoribosylformylglycinamidine synthase subunit PurL from Enterococcus faecalis (strain ATCC 700802 / V583).